A 414-amino-acid chain; its full sequence is MSVTHIIGAGLAGLSAAVAITHAGGRVKIYEASAMAGGRARSYHDKKLGIEIDNGNHMLLSGNHSAKTYLKRIGAEHRFKSPKEAAFSFCDLSDKERFTIKLSNGPLPWWVLCAKSRVPHSKAKDYLALLSLLLADHNTKIGDLVPDNTALWRKLLDPFFVSVLNTPAREGAACLAAAVIRETLMKGGKACIPRIAYPNLASSFIDPALDYLKARGVEVDFRNRLRQIHFSGQDVASLEFAHQDVKLGKGDKVIIALPAWVVQSLIPDIETPDKYQAIINAHFLMKPTAAMPHIMGVVGGTADWIFTFENRISVTISAANHLLALEKEELVKRIWDDIQTVYAFKQDMPEWQVVTEKRATFEATVEQNNRRPPAVTAWNNLFLAGNWVRTGLPATIESAIRSGQTAADLALSHS.

The protein belongs to the HpnE family.

It catalyses the reaction squalene + FAD + H2O + H(+) = hydroxysqualene + FADH2. Its pathway is secondary metabolite biosynthesis; hopanoid biosynthesis. Functionally, involved in the biosynthesis of the hopanoid precursor squalene (SQ) from farnesyl diphosphate (FPP). Catalyzes the third (last) step, the reduction of hydroxysqualene (HSQ) to SQ. The chain is Hydroxysqualene dehydroxylase from Zymomonas mobilis subsp. mobilis (strain ATCC 31821 / ZM4 / CP4).